Consider the following 122-residue polypeptide: Prefoldin subunit 1 (122 aa).

Belongs to the prefoldin subunit beta family. In terms of assembly, heterohexamer of two PFD-alpha type and four PFD-beta type subunits.

Binds specifically to cytosolic chaperonin (c-CPN) and transfers target proteins to it. Binds to nascent polypeptide chain and promotes folding in an environment in which there are many competing pathways for nonnative proteins. The polypeptide is Prefoldin subunit 1 (pfdn1) (Danio rerio (Zebrafish)).